A 387-amino-acid chain; its full sequence is MLHRIPAFIRPRPFSGLPLSCGNREVSVAASVLPAAGSGAVRTENTIQRHFCTSRSICSKKDDQSVPANETSQKAAESQGEGKETLKKNLLDVIKDMKVQLNTANVKTTKPRGRQPPAHLETAVGRLQKALGEPPRKRNEFLSPELVAAASAVADSLPFDKQTTKSELLKQLQQHEEESRAQTDRQKRRVSFTQIISNMKIAKSPSMRVSSRPQHQIQFDEEVDSSLSQEKPADFRRRKCLFKGKRLSIFDVKAFDDEAPEPEAAPSLWEIEFAKQLATVSEQPFGNGFEEMIQWTKEGKLWEFPVNNEAGLDDDGSEFHEHIFLEKHLEDFPKQGPIRLFMELVTCGLSKNPYLSVRQKVEHIEWFRNYFNEKRDILKENNIHLTS.

The N-terminal 56 residues, 1 to 56 (MLHRIPAFIRPRPFSGLPLSCGNREVSVAASVLPAAGSGAVRTENTIQRHFCTSRS), are a transit peptide targeting the mitochondrion. Disordered regions lie at residues 59–83 (SKKD…GEGK) and 203–228 (KSPS…SSLS). 2 stretches are compositionally biased toward polar residues: residues 66 to 76 (VPANETSQKAA) and 207 to 217 (MRVSSRPQHQI).

The protein belongs to the mitochondrion-specific ribosomal protein mS31 family. Component of the mitochondrial ribosome small subunit (28S) which comprises a 12S rRNA and about 30 distinct proteins.

It is found in the mitochondrion. The polypeptide is Small ribosomal subunit protein mS31 (Mrps31) (Rattus norvegicus (Rat)).